Consider the following 413-residue polypeptide: Elongation factor 1-alpha (413 aa).

GTP contacts are provided by residues 1-7 (HVDSGKS), 77-81 (DAPGH), and 139-142 (NKMD). In terms of domain architecture, tr-type G spans 1 to 228 (HVDSGKSTTT…DAILPPARPT (228 aa)). Glu-287 and Glu-360 each carry 5-glutamyl glycerylphosphorylethanolamine.

It belongs to the TRAFAC class translation factor GTPase superfamily. Classic translation factor GTPase family. EF-Tu/EF-1A subfamily.

It localises to the cytoplasm. Its function is as follows. This protein promotes the GTP-dependent binding of aminoacyl-tRNA to the A-site of ribosomes during protein biosynthesis. This Heliocheilus albipunctella (Millet head miner) protein is Elongation factor 1-alpha.